The following is a 309-amino-acid chain: Serpentine receptor class gamma-47 (309 aa).

5 helical membrane passes run 22–42 (IVQM…LFLF), 140–160 (FKLY…VLPL), 190–210 (IYSS…IFYI), 230–250 (LITL…ILMA), and 272–292 (ISSD…DVGI).

It belongs to the nematode receptor-like protein srg family.

The protein localises to the membrane. This is Serpentine receptor class gamma-47 (srg-47) from Caenorhabditis elegans.